A 289-amino-acid chain; its full sequence is Bifunctional protein FolD (289 aa).

Residues 166–168 (GVS) and isoleucine 232 each bind NADP(+).

Belongs to the tetrahydrofolate dehydrogenase/cyclohydrolase family. Homodimer.

The enzyme catalyses (6R)-5,10-methylene-5,6,7,8-tetrahydrofolate + NADP(+) = (6R)-5,10-methenyltetrahydrofolate + NADPH. It catalyses the reaction (6R)-5,10-methenyltetrahydrofolate + H2O = (6R)-10-formyltetrahydrofolate + H(+). It functions in the pathway one-carbon metabolism; tetrahydrofolate interconversion. In terms of biological role, catalyzes the oxidation of 5,10-methylenetetrahydrofolate to 5,10-methenyltetrahydrofolate and then the hydrolysis of 5,10-methenyltetrahydrofolate to 10-formyltetrahydrofolate. This chain is Bifunctional protein FolD, found in Methylobacillus flagellatus (strain ATCC 51484 / DSM 6875 / VKM B-1610 / KT).